The sequence spans 67 residues: Bombesin (67 aa).

A signal peptide spans 1 to 30; the sequence is MSLLPAVKVLPLGYLGIVLVFSLILRSAMV. Residues 31–49 constitute a propeptide that is removed on maturation; it reads DFIQDAGKLERIDTYKREA. Gln50 is modified (pyrrolidone carboxylic acid). Methionine amide is present on Met64.

This sequence belongs to the bombesin/neuromedin-B/ranatensin family. As to expression, expressed by the skin dorsal glands.

It is found in the secreted. Stimulates smooth muscle contraction in isolated rat stomach strip. The polypeptide is Bombesin (Sanguirana varians (Palawan frog)).